The chain runs to 171 residues: UPF0316 protein Exig_2248 (171 aa).

The next 3 membrane-spanning stretches (helical) occupy residues I4–M24, I31–V51, and T57–V77.

Belongs to the UPF0316 family.

It is found in the cell membrane. This Exiguobacterium sibiricum (strain DSM 17290 / CCUG 55495 / CIP 109462 / JCM 13490 / 255-15) protein is UPF0316 protein Exig_2248.